We begin with the raw amino-acid sequence, 244 residues long: uncharacterized protein (244 aa).

The region spanning 1–78 (MKKRFIYHDE…PKFNFMDRYY (78 aa)) is the WGR domain.

This is an uncharacterized protein from Escherichia coli (strain K12).